The sequence spans 467 residues: Probable cysteine protease ATG4 (467 aa).

The interval 32 to 93 (GQRYDSRPPL…EDPTQYGNWP (62 aa)) is disordered. Over residues 60–81 (ERNEDESWIRTSIDDKERKEAP) the composition is skewed to basic and acidic residues. Cys-149 functions as the Nucleophile in the catalytic mechanism. Residues Asp-325 and His-327 contribute to the active site. Over residues 343-352 (ATSDTPNLTA) the composition is skewed to polar residues. Disordered stretches follow at residues 343–390 (ATSD…SDLS) and 429–467 (QGVQGKSVVHVQDKEPPPRGQEREGAIDEVESWDEDGLQ). Low complexity predominate over residues 353-379 (STTSVSSTTSSTTIVPPADSIPAPSDP). Over residues 439–454 (VQDKEPPPRGQEREGA) the composition is skewed to basic and acidic residues. Acidic residues predominate over residues 455 to 467 (IDEVESWDEDGLQ).

Belongs to the peptidase C54 family.

Its subcellular location is the cytoplasm. The protein localises to the nucleus. It is found in the preautophagosomal structure. The enzyme catalyses [protein]-C-terminal L-amino acid-glycyl-phosphatidylethanolamide + H2O = [protein]-C-terminal L-amino acid-glycine + a 1,2-diacyl-sn-glycero-3-phosphoethanolamine. Its function is as follows. Cysteine protease that plays a key role in cytoplasm to vacuole transport (Cvt) and autophagy by mediating both proteolytic activation and delipidation of ATG8. Required for selective autophagic degradation of the nucleus (nucleophagy) as well as for mitophagy which contributes to regulate mitochondrial quantity and quality by eliminating the mitochondria to a basal level to fulfill cellular energy requirements and preventing excess ROS production. The protease activity is required for proteolytic activation of ATG8: cleaves the C-terminal amino acid of ATG8 to reveal a C-terminal glycine. ATG8 ubiquitin-like activity requires the exposure of the glycine at the C-terminus for its conjugation to phosphatidylethanolamine (PE) and its insertion to membranes, which is necessary for autophagy. The ATG8-PE conjugate mediates tethering between adjacent membranes and stimulates membrane hemifusion, leading to expansion of the autophagosomal membrane during autophagy. In addition to the protease activity, also catalyzes deconjugation of PE-conjugated forms of ATG8 during macroautophagy: ATG8 delipidation is required to release the protein from membranes, which facilitates multiple events during macroautophagy, and especially for efficient autophagosome biogenesis, the assembly of ATG9-containing tubulovesicular clusters into phagophores/autophagosomes, and for the disassembly of PAS-associated ATG components. ATG8 delipidation by ATG4 also recycles ATG8-PE generated on inappropriate membranes to maintain a reservoir of unlipidated ATG8 that is required for autophagosome formation at the PAS. The chain is Probable cysteine protease ATG4 (ATG4) from Phaeosphaeria nodorum (strain SN15 / ATCC MYA-4574 / FGSC 10173) (Glume blotch fungus).